A 640-amino-acid polypeptide reads, in one-letter code: 1-deoxy-D-xylulose-5-phosphate synthase (640 aa).

Thiamine diphosphate-binding positions include histidine 79 and 120–122 (AHS). Aspartate 151 is a binding site for Mg(2+). Residues 152–153 (GA), asparagine 180, tyrosine 289, and glutamate 371 each bind thiamine diphosphate. Asparagine 180 is a binding site for Mg(2+).

It belongs to the transketolase family. DXPS subfamily. In terms of assembly, homodimer. Requires Mg(2+) as cofactor. Thiamine diphosphate is required as a cofactor.

The enzyme catalyses D-glyceraldehyde 3-phosphate + pyruvate + H(+) = 1-deoxy-D-xylulose 5-phosphate + CO2. It participates in metabolic intermediate biosynthesis; 1-deoxy-D-xylulose 5-phosphate biosynthesis; 1-deoxy-D-xylulose 5-phosphate from D-glyceraldehyde 3-phosphate and pyruvate: step 1/1. Catalyzes the acyloin condensation reaction between C atoms 2 and 3 of pyruvate and glyceraldehyde 3-phosphate to yield 1-deoxy-D-xylulose-5-phosphate (DXP). This is 1-deoxy-D-xylulose-5-phosphate synthase from Novosphingobium aromaticivorans (strain ATCC 700278 / DSM 12444 / CCUG 56034 / CIP 105152 / NBRC 16084 / F199).